Here is an 85-residue protein sequence, read N- to C-terminus: Large ribosomal subunit protein bL27 (85 aa).

Residues Met-1–Gly-22 are disordered.

Belongs to the bacterial ribosomal protein bL27 family.

In Psychromonas ingrahamii (strain DSM 17664 / CCUG 51855 / 37), this protein is Large ribosomal subunit protein bL27.